We begin with the raw amino-acid sequence, 157 residues long: Probable succinate transporter subunit YjjB (157 aa).

The next 4 membrane-spanning stretches (helical) occupy residues 6–26, 51–71, 87–107, and 129–149; these read IILTLIEDMILAAIPAVGFAM, VLMISGMNIEWASFCAAILVG, VFTVAAIIPMFPGINAYVAMI, and FLKASFIVGALSIGLSLPGLW.

It belongs to the ThrE exporter (TC 2.A.79) family. The transporter is composed of YjjB and YjjP.

It is found in the cell inner membrane. Functionally, involved in succinate export with YjjP. Both proteins are required for export. In Proteus mirabilis (strain HI4320), this protein is Probable succinate transporter subunit YjjB.